A 232-amino-acid chain; its full sequence is Ubiquinone biosynthesis O-methyltransferase (232 aa).

Residues Arg-36, Gly-55, Asp-76, and Leu-120 each contribute to the S-adenosyl-L-methionine site.

It belongs to the methyltransferase superfamily. UbiG/COQ3 family.

It catalyses the reaction a 3-demethylubiquinol + S-adenosyl-L-methionine = a ubiquinol + S-adenosyl-L-homocysteine + H(+). It carries out the reaction a 3-(all-trans-polyprenyl)benzene-1,2-diol + S-adenosyl-L-methionine = a 2-methoxy-6-(all-trans-polyprenyl)phenol + S-adenosyl-L-homocysteine + H(+). Its pathway is cofactor biosynthesis; ubiquinone biosynthesis. In terms of biological role, O-methyltransferase that catalyzes the 2 O-methylation steps in the ubiquinone biosynthetic pathway. This chain is Ubiquinone biosynthesis O-methyltransferase, found in Pseudomonas paraeruginosa (strain DSM 24068 / PA7) (Pseudomonas aeruginosa (strain PA7)).